The primary structure comprises 165 residues: NADPH-dependent 7-cyano-7-deazaguanine reductase (165 aa).

Residue Cys-56 is the Thioimide intermediate of the active site. The active-site Proton donor is Asp-63. Substrate is bound by residues 78–80 (VES) and 97–98 (HE).

It belongs to the GTP cyclohydrolase I family. QueF type 1 subfamily.

The protein localises to the cytoplasm. It carries out the reaction 7-aminomethyl-7-carbaguanine + 2 NADP(+) = 7-cyano-7-deazaguanine + 2 NADPH + 3 H(+). It participates in tRNA modification; tRNA-queuosine biosynthesis. In terms of biological role, catalyzes the NADPH-dependent reduction of 7-cyano-7-deazaguanine (preQ0) to 7-aminomethyl-7-deazaguanine (preQ1). The sequence is that of NADPH-dependent 7-cyano-7-deazaguanine reductase from Oceanobacillus iheyensis (strain DSM 14371 / CIP 107618 / JCM 11309 / KCTC 3954 / HTE831).